The sequence spans 251 residues: Cathelicidin-B1 (251 aa).

Residues 1-20 (MGRMWASEVLLLLLLGSSRA) form the signal peptide. A propeptide spanning residues 21-211 (VTPGLDVSTA…ELRCRPLRPQ (191 aa)) is cleaved from the precursor. Residues 29–109 (TAPGLDGSIP…TITPKQDGSI (81 aa)) are disordered. 2 disulfides stabilise this stretch: C172–C181 and C189–C205.

Belongs to the cathelicidin family. As to expression, detected in bursa of Fabricius, in filamentous structures surrounding the basal and lateral surfaces of bursal M cells (at protein level). Detected in bursa of Fabricius, in secretory enterocytes of the interfollicular bursal epithelium, but not in M cells.

Its subcellular location is the secreted. Functionally, has potent antimicrobial activity against Gram-positive and Gram-negative bacteria (in vitro). May play a role in the innate immune response. In Gallus gallus (Chicken), this protein is Cathelicidin-B1 (CATHB1).